We begin with the raw amino-acid sequence, 434 residues long: Methyl-coenzyme M reductase subunit beta (434 aa).

Coenzyme M is bound at residue Tyr365. Residue Gly367 coordinates coenzyme B.

It belongs to the methyl-coenzyme M reductase beta subunit family. MCR is a hexamer of two alpha, two beta, and two gamma chains, forming a dimer of heterotrimers. Requires coenzyme F430 as cofactor.

The protein resides in the cytoplasm. The catalysed reaction is coenzyme B + methyl-coenzyme M = methane + coenzyme M-coenzyme B heterodisulfide. It participates in one-carbon metabolism; methyl-coenzyme M reduction; methane from methyl-coenzyme M: step 1/1. Its function is as follows. Component of the methyl-coenzyme M reductase (MCR) I that catalyzes the reductive cleavage of methyl-coenzyme M (CoM-S-CH3 or 2-(methylthio)ethanesulfonate) using coenzyme B (CoB or 7-mercaptoheptanoylthreonine phosphate) as reductant which results in the production of methane and the mixed heterodisulfide of CoB and CoM (CoM-S-S-CoB). This is the final step in methanogenesis. The chain is Methyl-coenzyme M reductase subunit beta (mcrB) from Methanosarcina barkeri (strain Fusaro / DSM 804).